The following is a 154-amino-acid chain: Superoxide dismutase [Cu-Zn] (154 aa).

Residues H47, H49, and H64 each coordinate Cu cation. C58 and C147 are joined by a disulfide. Positions 64, 72, 81, and 84 each coordinate Zn(2+). Cu cation is bound at residue H121. Position 144 (R144) interacts with substrate.

This sequence belongs to the Cu-Zn superoxide dismutase family. Homodimer. The cofactor is Cu cation. It depends on Zn(2+) as a cofactor.

It localises to the cytoplasm. The protein localises to the mitochondrion. Its subcellular location is the cell membrane. The catalysed reaction is 2 superoxide + 2 H(+) = H2O2 + O2. Destroys radicals which are normally produced within the cells and which are toxic to biological systems. Destroys radicals produced by host defense mechanisms. This is Superoxide dismutase [Cu-Zn] from Cryptococcus neoformans var. grubii serotype A (strain H99 / ATCC 208821 / CBS 10515 / FGSC 9487) (Filobasidiella neoformans var. grubii).